The primary structure comprises 366 residues: tRNA-specific 2-thiouridylase MnmA (366 aa).

ATP contacts are provided by residues 6–13 (AMSGGVDS) and Leu-32. Cys-101 functions as the Nucleophile in the catalytic mechanism. A disulfide bridge connects residues Cys-101 and Cys-199. An ATP-binding site is contributed by Gly-125. The interaction with tRNA stretch occupies residues 149-151 (KDQ). The Cysteine persulfide intermediate role is filled by Cys-199.

The protein belongs to the MnmA/TRMU family.

The protein resides in the cytoplasm. It catalyses the reaction S-sulfanyl-L-cysteinyl-[protein] + uridine(34) in tRNA + AH2 + ATP = 2-thiouridine(34) in tRNA + L-cysteinyl-[protein] + A + AMP + diphosphate + H(+). In terms of biological role, catalyzes the 2-thiolation of uridine at the wobble position (U34) of tRNA, leading to the formation of s(2)U34. This chain is tRNA-specific 2-thiouridylase MnmA, found in Corynebacterium diphtheriae (strain ATCC 700971 / NCTC 13129 / Biotype gravis).